A 540-amino-acid polypeptide reads, in one-letter code: Chaperonin GroEL (540 aa).

ATP contacts are provided by residues 30–33 (TLGP), Lys51, 87–91 (DGTTT), Gly415, and Asp495.

Belongs to the chaperonin (HSP60) family. In terms of assembly, forms a cylinder of 14 subunits composed of two heptameric rings stacked back-to-back. Interacts with the co-chaperonin GroES.

The protein resides in the cytoplasm. It catalyses the reaction ATP + H2O + a folded polypeptide = ADP + phosphate + an unfolded polypeptide.. Functionally, together with its co-chaperonin GroES, plays an essential role in assisting protein folding. The GroEL-GroES system forms a nano-cage that allows encapsulation of the non-native substrate proteins and provides a physical environment optimized to promote and accelerate protein folding. This is Chaperonin GroEL from Serratia marcescens.